Consider the following 180-residue polypeptide: Signal peptidase complex subunit 3 (180 aa).

The Cytoplasmic segment spans residues 1 to 12 (MHNLLSRANSLL). Residues 13 to 33 (AFTLWVMAAVTAACFLSTVFL) form a helical; Signal-anchor for type II membrane protein membrane-spanning segment. Residues 34-180 (DYTVSNHLEV…PTTYTTTRRS (147 aa)) are Lumenal-facing. The N-linked (GlcNAc...) asparagine glycan is linked to Asn141.

It belongs to the SPCS3 family. As to quaternary structure, component of the signal peptidase complex (SPC) composed of a catalytic subunit sec-11 and three accessory subunits spcs-1, spcs-2 and spcs-3. The complex induces a local thinning of the ER membrane which is used to measure the length of the signal peptide (SP) h-region of protein substrates. This ensures the selectivity of the complex towards h-regions shorter than 18-20 amino acids.

The protein localises to the endoplasmic reticulum membrane. In terms of biological role, essential component of the signal peptidase complex (SPC) which catalyzes the cleavage of N-terminal signal sequences from nascent proteins as they are translocated into the lumen of the endoplasmic reticulum. Essential for the SPC catalytic activity, possibly by stabilizing and positioning the active center of the complex close to the lumenal surface. The sequence is that of Signal peptidase complex subunit 3 from Caenorhabditis briggsae.